We begin with the raw amino-acid sequence, 511 residues long: 2-isopropylmalate synthase (511 aa).

The Pyruvate carboxyltransferase domain maps to Ile-4 to Tyr-266. The Mn(2+) site is built by Asp-13, His-201, His-203, and Asn-237. Positions Val-391 to Asn-511 are regulatory domain.

The protein belongs to the alpha-IPM synthase/homocitrate synthase family. LeuA type 1 subfamily. In terms of assembly, homodimer. It depends on Mn(2+) as a cofactor.

Its subcellular location is the cytoplasm. The catalysed reaction is 3-methyl-2-oxobutanoate + acetyl-CoA + H2O = (2S)-2-isopropylmalate + CoA + H(+). It functions in the pathway amino-acid biosynthesis; L-leucine biosynthesis; L-leucine from 3-methyl-2-oxobutanoate: step 1/4. Catalyzes the condensation of the acetyl group of acetyl-CoA with 3-methyl-2-oxobutanoate (2-ketoisovalerate) to form 3-carboxy-3-hydroxy-4-methylpentanoate (2-isopropylmalate). This chain is 2-isopropylmalate synthase, found in Acetivibrio thermocellus (strain ATCC 27405 / DSM 1237 / JCM 9322 / NBRC 103400 / NCIMB 10682 / NRRL B-4536 / VPI 7372) (Clostridium thermocellum).